Consider the following 513-residue polypeptide: MSDTTLEKIIVLDYGSQYNQLIARRIREIGVFSELMSHKVTAKEIREINPIGIILSGGPNSVYDEGSFDIDPEIFELGLPVLGICYGMQLLSYKLGGMVEAAGEREYGVAPLQLTGKSALFAGTPEVQDVLMSHGDRVTAIPEGFHVVGTSPNSPFAAVENTERNLYGIQFHPEVRHSVHGTEMLRNFALNICGAKGNWSMENFIDMQIKNIREKVGDKKVLLGLSGGVDSSVVGVLLQRAIGDQLTSIFVDHGFLRKGEADQVMETLGGKFGLNIIKVDAQKRFMDKLVGLSDPETKRKIIGNEFVYVFDDEANKLEGVDFLAQGTLYTDVIESGTDTAQTIKSHHNVGGLPEDMQFQLIEPLNTLFKDEVRALGTQLGMPDEIVWRQPFPGPGLAIRVLGDLTEEKLETVRESDAILREEIAAAGLERDVWQYFTVNTDVKSVGVMGDQRTYDYTLAIRAITSIDGMTADFAQLPWDLLQKISKRIVNEVDHVNRIVYDITSKPPATVEWQ.

Residues Lys8–Asn198 enclose the Glutamine amidotransferase type-1 domain. Cys85 acts as the Nucleophile in catalysis. Residues His172 and Glu174 contribute to the active site. Residues Trp199–Arg388 form the GMPS ATP-PPase domain. Position 226–232 (Ser226–Ser232) interacts with ATP.

In terms of assembly, homodimer.

It carries out the reaction XMP + L-glutamine + ATP + H2O = GMP + L-glutamate + AMP + diphosphate + 2 H(+). It participates in purine metabolism; GMP biosynthesis; GMP from XMP (L-Gln route): step 1/1. Catalyzes the synthesis of GMP from XMP. In Lactococcus lactis subsp. lactis (strain IL1403) (Streptococcus lactis), this protein is GMP synthase [glutamine-hydrolyzing] (guaA).